Consider the following 340-residue polypeptide: Ketol-acid reductoisomerase (NADP(+)) (340 aa).

The region spanning 1–183 (MAITVYYDKD…GGGRTGIIET (183 aa)) is the KARI N-terminal Rossmann domain. Residues 26-29 (FGSQ), Arg49, Ser52, Ser54, and 84-87 (DEIQ) contribute to the NADP(+) site. Residue His109 is part of the active site. Residue Gly135 participates in NADP(+) binding. The region spanning 184-329 (TFKAETETDL…RNLRAMMPWI (146 aa)) is the KARI C-terminal knotted domain. Residues Asp192, Glu196, Glu228, and Glu232 each coordinate Mg(2+). Substrate is bound at residue Ser253.

It belongs to the ketol-acid reductoisomerase family. Requires Mg(2+) as cofactor.

The catalysed reaction is (2R)-2,3-dihydroxy-3-methylbutanoate + NADP(+) = (2S)-2-acetolactate + NADPH + H(+). It catalyses the reaction (2R,3R)-2,3-dihydroxy-3-methylpentanoate + NADP(+) = (S)-2-ethyl-2-hydroxy-3-oxobutanoate + NADPH + H(+). Its pathway is amino-acid biosynthesis; L-isoleucine biosynthesis; L-isoleucine from 2-oxobutanoate: step 2/4. It functions in the pathway amino-acid biosynthesis; L-valine biosynthesis; L-valine from pyruvate: step 2/4. Involved in the biosynthesis of branched-chain amino acids (BCAA). Catalyzes an alkyl-migration followed by a ketol-acid reduction of (S)-2-acetolactate (S2AL) to yield (R)-2,3-dihydroxy-isovalerate. In the isomerase reaction, S2AL is rearranged via a Mg-dependent methyl migration to produce 3-hydroxy-3-methyl-2-ketobutyrate (HMKB). In the reductase reaction, this 2-ketoacid undergoes a metal-dependent reduction by NADPH to yield (R)-2,3-dihydroxy-isovalerate. This is Ketol-acid reductoisomerase (NADP(+)) from Campylobacter jejuni subsp. doylei (strain ATCC BAA-1458 / RM4099 / 269.97).